Here is a 1088-residue protein sequence, read N- to C-terminus: Methionine S-methyltransferase (1088 aa).

It belongs to the class I-like SAM-binding methyltransferase superfamily. Homotetramer.

Its subcellular location is the cytoplasm. It carries out the reaction L-methionine + S-adenosyl-L-methionine = S-methyl-L-methionine + S-adenosyl-L-homocysteine. Functionally, catalyzes the S-methylmethionine (SMM) biosynthesis from adenosyl-L-homocysteine (AdoMet) and methionine. SMM biosynthesis (by MMT1) and degradation (by HMT-1, HMT-2 and HMT-3) constitute the SMM cycle in plants, which is probably required to achieve short term control of AdoMet level. Also able to catalyze the selenium-methylmethionine (SeMM) from AdoMet and selenium-methionine (SeMet). May play a role in phoem sulfur transport; such function is however not essential. This chain is Methionine S-methyltransferase (MMT1), found in Wollastonia biflora (Beach sunflower).